We begin with the raw amino-acid sequence, 379 residues long: Lipid-A-disaccharide synthase (379 aa).

The protein belongs to the LpxB family.

It catalyses the reaction a lipid X + a UDP-2-N,3-O-bis[(3R)-3-hydroxyacyl]-alpha-D-glucosamine = a lipid A disaccharide + UDP + H(+). It participates in bacterial outer membrane biogenesis; LPS lipid A biosynthesis. Its function is as follows. Condensation of UDP-2,3-diacylglucosamine and 2,3-diacylglucosamine-1-phosphate to form lipid A disaccharide, a precursor of lipid A, a phosphorylated glycolipid that anchors the lipopolysaccharide to the outer membrane of the cell. The protein is Lipid-A-disaccharide synthase of Persephonella marina (strain DSM 14350 / EX-H1).